A 180-amino-acid chain; its full sequence is Inner membrane-spanning protein YciB (180 aa).

5 helical membrane-spanning segments follow: residues 10–30, 47–67, 74–94, 121–141, and 151–171; these read IIAF…GVLM, ITTR…VTLL, IKMK…GGLI, YAWI…AEFW, and VFGI…YMYH.

The protein belongs to the YciB family.

The protein localises to the cell inner membrane. Plays a role in cell envelope biogenesis, maintenance of cell envelope integrity and membrane homeostasis. This chain is Inner membrane-spanning protein YciB, found in Idiomarina loihiensis (strain ATCC BAA-735 / DSM 15497 / L2-TR).